A 560-amino-acid polypeptide reads, in one-letter code: Eukaryotic translation initiation factor 3 subunit D-1 (560 aa).

Residues 98–166 are disordered; it reads VQKPPHQRGR…RGPPPKMRES (69 aa). Basic residues predominate over residues 100-121; the sequence is KPPHQRGRFRNMRNSRSGRGRN. Phosphothreonine is present on Thr-128. Residues 147–156 show a composition bias toward basic residues; it reads GRGMGKKFGH. The RNA gate stretch occupies residues 291-305; that stretch reads EFDLLTVNESSVEPP.

Belongs to the eIF-3 subunit D family. In terms of assembly, component of the eukaryotic translation initiation factor 3 (eIF-3) complex. The eIF-3 complex interacts with pix.

The protein localises to the cytoplasm. MRNA cap-binding component of the eukaryotic translation initiation factor 3 (eIF-3) complex, which is involved in protein synthesis of a specialized repertoire of mRNAs and, together with other initiation factors, stimulates binding of mRNA and methionyl-tRNAi to the 40S ribosome. The eIF-3 complex specifically targets and initiates translation of a subset of mRNAs involved in cell proliferation. In the eIF-3 complex, eif3d specifically recognizes and binds the 7-methylguanosine cap of a subset of mRNAs. This chain is Eukaryotic translation initiation factor 3 subunit D-1, found in Drosophila yakuba (Fruit fly).